The chain runs to 84 residues: Putative membrane protein insertion efficiency factor (84 aa).

The tract at residues 63 to 84 (LGGSGYDPPPPPKTPRKWKCEE) is disordered.

Belongs to the UPF0161 family.

The protein resides in the cell inner membrane. In terms of biological role, could be involved in insertion of integral membrane proteins into the membrane. This is Putative membrane protein insertion efficiency factor from Caulobacter sp. (strain K31).